A 566-amino-acid polypeptide reads, in one-letter code: MFPFGPHSPGGDETAGAEEPPPLGGPAAASRPPSPAPRPASPQRGADAASPPPVAGSPRLPGGPAVSPAERAGEFAAPGALELSAATASASQAKLSPSSSPRRRSRPDWRAGGRSRQGLGAGLGGPGARLFGWLRERSLGRGLFVDPARDNFRTMTNLYGSIHPADSVYLSTRTHGAVFNLEYSPDGSVLTVACEQTEVLLFDPISSKHIKTLSEAHEDCVNNIRFLDNRLFATCSDDTTIALWDLRKLNTKVCTLHGHTSWVKNIEYDTNTRLLVTSGFDGNVIIWDTNRCTEDGCPHKKFFHTRFLMRMRLTPDCSKMLISTSSGYLLILHELDLTKSLEVGSYPILRARRTTSSSDLTTTSSSSGSRVSGSPCHHNDSNSTEKHMSRASQREGVSPRNSLEVLTPEVPGERDRGNCITSLQLHPKGWATLLRCSSNTDDQEWTCVYEFQEGAPVRPVSPRCSLRLTHYIEEANVGRGYIKELCFSPDGRMISSPHGYGIRLLGFDKQCSELVDCLPKEASPLRVIRSLYSHNDVVLTTKFSPTHCQIASGCLSGRVSLYQPKF.

Disordered regions lie at residues 1–72 (MFPF…AERA) and 87–123 (TASA…GAGL). Phosphoserine is present on residues serine 50, serine 57, serine 67, serine 96, serine 99, and serine 100. The segment covering 87–100 (TASASQAKLSPSSS) has biased composition (low complexity). An Omega-N-methylarginine modification is found at arginine 141. WD repeat units follow at residues 173–212 (RTHG…HIKT), 216–254 (AHED…TKVC), 258–297 (GHTS…EDGC), and 303–342 (FHTR…KSLE). A compositionally biased stretch (low complexity) spans 354-374 (TTSSSDLTTTSSSSGSRVSGS). The disordered stretch occupies residues 354–413 (TTSSSDLTTTSSSSGSRVSGSPCHHNDSNSTEKHMSRASQREGVSPRNSLEVLTPEVPGE). The residue at position 356 (serine 356) is a Phosphoserine. Positions 377–388 (HHNDSNSTEKHM) are enriched in basic and acidic residues. WD repeat units lie at residues 415 to 455 (DRGN…QEGA), 477 to 515 (VGRG…SELV), and 533 to 566 (SHND…QPKF).

Belongs to the WD repeat DCAF10 family. As to quaternary structure, interacts with DDB1.

It functions in the pathway protein modification; protein ubiquitination. May function as a substrate receptor for CUL4-DDB1 E3 ubiquitin-protein ligase complex. The protein is DDB1- and CUL4-associated factor 10 (Dcaf10) of Mus musculus (Mouse).